A 945-amino-acid chain; its full sequence is Splicing factor, suppressor of white-apricot homolog (945 aa).

2 disordered regions span residues 1-28 and 156-185; these read MYGA…GTGT and DYYD…EENE. Composition is skewed to basic and acidic residues over residues 9–21 and 169–178; these read AKPE…KEEA and PSKQREKNEA. The stretch at 211 to 253 is one SURP motif 1 repeat; that stretch reads IIERTANFVCKQGAQFEIMLKAKQARNSQFDFLRFDHYLNPYY. Residues 271 to 301 form a disordered region; that stretch reads SKNEEKKKSGPTSDNEEEDDEEDGSYLHPSL. The residue at position 283 (S283) is a Phosphoserine. The segment covering 284-294 has biased composition (acidic residues); that stretch reads DNEEEDDEEDG. N6-acetyllysine is present on K315. Disordered regions lie at residues 332–355 and 403–448; these read KAQA…PSQV and SSSP…PVAI. A compositionally biased stretch (low complexity) spans 335-352; sequence ADSSAPAPPTADGTPAQP. Over residues 412–426 the composition is skewed to pro residues; that stretch reads VPPPPGTTPPPPPTT. A compositionally biased stretch (low complexity) spans 427–447; the sequence is AEPSSGVTSTTTTTSALAPVA. An SURP motif 2 repeat occupies 458–498; that stretch reads VIDKLAEYVARNGLKFETSVRAKNDQRFEFLQPWHQYNAYY. 3 disordered regions span residues 512–564, 589–680, and 712–921; these read GSTQ…KSTV, PLEK…QAER, and DTGV…VQSK. Over residues 514–527 the composition is skewed to low complexity; the sequence is TQAASTAEEAPTET. Over residues 528–540 the composition is skewed to acidic residues; sequence AVEESGEAGEDGA. The segment covering 589–598 has biased composition (basic and acidic residues); the sequence is PLEKNRVKLD. A phosphoserine mark is found at S601 and S621. The span at 615–630 shows a compositional bias: low complexity; that stretch reads SSVANPSPAAAPPSVA. The stretch at 632-686 forms a coiled coil; it reads EEKKPQLTQEELEAKQAKQKLEDRLAAAAREKLAQASKESKEKQLQAERKRKAAL. T639 carries the post-translational modification Phosphothreonine. Basic and acidic residues-rich tracts occupy residues 643–679 and 733–752; these read LEAK…LQAE and KPPE…EERE. Basic residues-rich tracts occupy residues 753–787 and 795–810; these read KKKK…KAKH and TVRR…RRRA. Positions 811 to 821 are enriched in basic and acidic residues; sequence HSPERRREERS. Residues S829 and S831 each carry the phosphoserine modification. Positions 835–861 are enriched in basic residues; it reads SRKRTRSRSPHEKKKKRRSRSRTKAKA. The segment covering 871-894 has biased composition (low complexity); that stretch reads QAAQRPSAHSAHSASISPVESRGS. Residues 895 to 908 are compositionally biased toward basic and acidic residues; sequence SQERSRGVSQEKDG. A phosphoserine mark is found at S899 and S903. A compositionally biased stretch (low complexity) spans 909-920; it reads QISSAIVSSVQS.

It is found in the nucleus. Plays a role as an alternative splicing regulator. Regulates its own expression at the level of RNA processing. Also regulates the splicing of fibronectin and CD45 genes. May act, at least in part, by interaction with other R/S-containing splicing factors. Represses the splicing of MAPT/Tau exon 10. This Mus musculus (Mouse) protein is Splicing factor, suppressor of white-apricot homolog (Sfswap).